The chain runs to 398 residues: Protein RecA (398 aa).

An ATP-binding site is contributed by 83–90 (GPESSGKT). The disordered stretch occupies residues 351–398 (AGQKNDKKSKLEEKANAGAGISEASEPDSSAEEDFEEFAPIDIGSLGE). The span at 354-365 (KNDKKSKLEEKA) shows a compositional bias: basic and acidic residues. Over residues 375–389 (SEPDSSAEEDFEEFA) the composition is skewed to acidic residues.

It belongs to the RecA family.

Its subcellular location is the cytoplasm. Its function is as follows. Can catalyze the hydrolysis of ATP in the presence of single-stranded DNA, the ATP-dependent uptake of single-stranded DNA by duplex DNA, and the ATP-dependent hybridization of homologous single-stranded DNAs. It interacts with LexA causing its activation and leading to its autocatalytic cleavage. The polypeptide is Protein RecA (Ruminococcus albus (strain ATCC 27210 / DSM 20455 / JCM 14654 / NCDO 2250 / 7)).